The sequence spans 423 residues: Glucose-1-phosphate adenylyltransferase (423 aa).

Residues Tyr98, Gly163, 178–179, and Ser189 each bind alpha-D-glucose 1-phosphate; that span reads EK.

The protein belongs to the bacterial/plant glucose-1-phosphate adenylyltransferase family. In terms of assembly, homotetramer.

It catalyses the reaction alpha-D-glucose 1-phosphate + ATP + H(+) = ADP-alpha-D-glucose + diphosphate. It functions in the pathway glycan biosynthesis; glycogen biosynthesis. Its function is as follows. Involved in the biosynthesis of ADP-glucose, a building block required for the elongation reactions to produce glycogen. Catalyzes the reaction between ATP and alpha-D-glucose 1-phosphate (G1P) to produce pyrophosphate and ADP-Glc. In Thermotoga neapolitana (strain ATCC 49049 / DSM 4359 / NBRC 107923 / NS-E), this protein is Glucose-1-phosphate adenylyltransferase.